A 246-amino-acid chain; its full sequence is Probable transcriptional regulatory protein CLB_3102 (246 aa).

The protein belongs to the TACO1 family.

It localises to the cytoplasm. This Clostridium botulinum (strain ATCC 19397 / Type A) protein is Probable transcriptional regulatory protein CLB_3102.